Consider the following 642-residue polypeptide: Threonine--tRNA ligase (642 aa).

Residues 1 to 61 (MPVITLPDGS…DTDSELSIIT (61 aa)) form the TGS domain. The tract at residues 243-534 (DHRKIGKQLD…LIEEYAGKFP (292 aa)) is catalytic. Zn(2+) contacts are provided by cysteine 334, histidine 385, and histidine 511.

Belongs to the class-II aminoacyl-tRNA synthetase family. In terms of assembly, homodimer. The cofactor is Zn(2+).

It is found in the cytoplasm. It catalyses the reaction tRNA(Thr) + L-threonine + ATP = L-threonyl-tRNA(Thr) + AMP + diphosphate + H(+). In terms of biological role, catalyzes the attachment of threonine to tRNA(Thr) in a two-step reaction: L-threonine is first activated by ATP to form Thr-AMP and then transferred to the acceptor end of tRNA(Thr). Also edits incorrectly charged L-seryl-tRNA(Thr). This is Threonine--tRNA ligase from Shewanella sediminis (strain HAW-EB3).